A 102-amino-acid polypeptide reads, in one-letter code: Small ribosomal subunit protein uS10 (102 aa).

It belongs to the universal ribosomal protein uS10 family. In terms of assembly, part of the 30S ribosomal subunit.

In terms of biological role, involved in the binding of tRNA to the ribosomes. The polypeptide is Small ribosomal subunit protein uS10 (Shouchella clausii (strain KSM-K16) (Alkalihalobacillus clausii)).